Reading from the N-terminus, the 130-residue chain is Small ribosomal subunit protein uS11 (130 aa).

Belongs to the universal ribosomal protein uS11 family. As to quaternary structure, part of the 30S ribosomal subunit. Interacts with proteins S7 and S18. Binds to IF-3.

Functionally, located on the platform of the 30S subunit, it bridges several disparate RNA helices of the 16S rRNA. Forms part of the Shine-Dalgarno cleft in the 70S ribosome. The polypeptide is Small ribosomal subunit protein uS11 (Synechococcus sp. (strain CC9605)).